A 136-amino-acid polypeptide reads, in one-letter code: Large ribosomal subunit protein uL16 (136 aa).

It belongs to the universal ribosomal protein uL16 family. As to quaternary structure, part of the 50S ribosomal subunit.

Binds 23S rRNA and is also seen to make contacts with the A and possibly P site tRNAs. This chain is Large ribosomal subunit protein uL16, found in Rickettsia africae (strain ESF-5).